A 182-amino-acid polypeptide reads, in one-letter code: Bifunctional protein PyrR (182 aa).

Positions 99–111 (IVLVDDVLFTGRT) match the PRPP-binding motif.

Belongs to the purine/pyrimidine phosphoribosyltransferase family. PyrR subfamily. Homodimer and homohexamer; in equilibrium.

It carries out the reaction UMP + diphosphate = 5-phospho-alpha-D-ribose 1-diphosphate + uracil. Regulates transcriptional attenuation of the pyrimidine nucleotide (pyr) operon by binding in a uridine-dependent manner to specific sites on pyr mRNA. This disrupts an antiterminator hairpin in the RNA and favors formation of a downstream transcription terminator, leading to a reduced expression of downstream genes. In terms of biological role, also displays a weak uracil phosphoribosyltransferase activity which is not physiologically significant. This chain is Bifunctional protein PyrR, found in Caldicellulosiruptor bescii (strain ATCC BAA-1888 / DSM 6725 / KCTC 15123 / Z-1320) (Anaerocellum thermophilum).